A 32-amino-acid chain; its full sequence is Dermatoxin-J2 (32 aa).

Gln-32 bears the Glutamine amide mark.

In terms of tissue distribution, expressed by the skin glands.

It localises to the secreted. Its function is as follows. Antimicrobial peptide. The polypeptide is Dermatoxin-J2 (Phasmahyla jandaia (Jandaia leaf frog)).